A 367-amino-acid chain; its full sequence is Peptide chain release factor 2 (367 aa).

N5-methylglutamine is present on Q254.

Belongs to the prokaryotic/mitochondrial release factor family. Methylated by PrmC. Methylation increases the termination efficiency of RF2.

Its subcellular location is the cytoplasm. Its function is as follows. Peptide chain release factor 2 directs the termination of translation in response to the peptide chain termination codons UGA and UAA. This chain is Peptide chain release factor 2, found in Acidovorax ebreus (strain TPSY) (Diaphorobacter sp. (strain TPSY)).